Here is a 161-residue protein sequence, read N- to C-terminus: Ubiquitin-conjugating enzyme E2Q-like protein 1 (161 aa).

Positions 1–154 constitute a UBC core domain; the sequence is MKELQDIARL…VKTHEKYGWV (154 aa). The Glycyl thioester intermediate role is filled by Cys-88.

This sequence belongs to the ubiquitin-conjugating enzyme family. As to quaternary structure, interacts with FBXW7.

Its subcellular location is the nucleus. It carries out the reaction S-ubiquitinyl-[E1 ubiquitin-activating enzyme]-L-cysteine + [E2 ubiquitin-conjugating enzyme]-L-cysteine = [E1 ubiquitin-activating enzyme]-L-cysteine + S-ubiquitinyl-[E2 ubiquitin-conjugating enzyme]-L-cysteine.. It participates in protein modification; protein ubiquitination. Functionally, probable E2 ubiquitin-protein ligase that catalyzes the covalent attachment of ubiquitin to target proteins. May facilitate the monoubiquitination and degradation of MTOR and CCNE1 through interaction with FBXW7. In Mus musculus (Mouse), this protein is Ubiquitin-conjugating enzyme E2Q-like protein 1 (Ube2ql1).